The primary structure comprises 509 residues: ATP synthase subunit alpha (509 aa).

169-176 (GDRQTGKT) is a binding site for ATP.

This sequence belongs to the ATPase alpha/beta chains family. F-type ATPases have 2 components, CF(1) - the catalytic core - and CF(0) - the membrane proton channel. CF(1) has five subunits: alpha(3), beta(3), gamma(1), delta(1), epsilon(1). CF(0) has three main subunits: a(1), b(2) and c(9-12). The alpha and beta chains form an alternating ring which encloses part of the gamma chain. CF(1) is attached to CF(0) by a central stalk formed by the gamma and epsilon chains, while a peripheral stalk is formed by the delta and b chains.

The protein localises to the cell inner membrane. It catalyses the reaction ATP + H2O + 4 H(+)(in) = ADP + phosphate + 5 H(+)(out). Produces ATP from ADP in the presence of a proton gradient across the membrane. The alpha chain is a regulatory subunit. This is ATP synthase subunit alpha from Parvibaculum lavamentivorans (strain DS-1 / DSM 13023 / NCIMB 13966).